A 239-amino-acid chain; its full sequence is Fatty acid metabolism regulator protein (239 aa).

One can recognise an HTH gntR-type domain in the interval 6-74 (QSPAGFAEEY…HGKPTKVNNF (69 aa)). Residues 34–53 (ERELSELIGVTRTTLREVLQ) constitute a DNA-binding region (H-T-H motif).

As to quaternary structure, homodimer.

It is found in the cytoplasm. Its function is as follows. Multifunctional regulator of fatty acid metabolism. This Cronobacter sakazakii (strain ATCC BAA-894) (Enterobacter sakazakii) protein is Fatty acid metabolism regulator protein.